The chain runs to 1200 residues: Ice nucleation protein (1200 aa).

Residues 176-1151 (ATYGSTLSGD…LSAGEDSILI (976 aa)) form an octapeptide periodicity region.

The protein belongs to the bacterial ice nucleation protein family.

It is found in the cell outer membrane. Ice nucleation proteins enable bacteria to nucleate crystallization in supercooled water. In Pseudomonas syringae pv. syringae, this protein is Ice nucleation protein (inaZ).